A 284-amino-acid chain; its full sequence is 4-hydroxy-3-methylbut-2-enyl diphosphate reductase (284 aa).

Residue Cys12 participates in [4Fe-4S] cluster binding. Residues His40 and His72 each contribute to the (2E)-4-hydroxy-3-methylbut-2-enyl diphosphate site. 2 residues coordinate dimethylallyl diphosphate: His40 and His72. Positions 40 and 72 each coordinate isopentenyl diphosphate. [4Fe-4S] cluster is bound at residue Cys94. His122 contributes to the (2E)-4-hydroxy-3-methylbut-2-enyl diphosphate binding site. His122 serves as a coordination point for dimethylallyl diphosphate. His122 contributes to the isopentenyl diphosphate binding site. Residue Glu124 is the Proton donor of the active site. Thr161 provides a ligand contact to (2E)-4-hydroxy-3-methylbut-2-enyl diphosphate. Cys193 serves as a coordination point for [4Fe-4S] cluster. Residues Ser221, Asn223, and Ser264 each contribute to the (2E)-4-hydroxy-3-methylbut-2-enyl diphosphate site. 3 residues coordinate dimethylallyl diphosphate: Ser221, Asn223, and Ser264. The isopentenyl diphosphate site is built by Ser221, Asn223, and Ser264.

It belongs to the IspH family. It depends on [4Fe-4S] cluster as a cofactor.

The catalysed reaction is isopentenyl diphosphate + 2 oxidized [2Fe-2S]-[ferredoxin] + H2O = (2E)-4-hydroxy-3-methylbut-2-enyl diphosphate + 2 reduced [2Fe-2S]-[ferredoxin] + 2 H(+). The enzyme catalyses dimethylallyl diphosphate + 2 oxidized [2Fe-2S]-[ferredoxin] + H2O = (2E)-4-hydroxy-3-methylbut-2-enyl diphosphate + 2 reduced [2Fe-2S]-[ferredoxin] + 2 H(+). It functions in the pathway isoprenoid biosynthesis; dimethylallyl diphosphate biosynthesis; dimethylallyl diphosphate from (2E)-4-hydroxy-3-methylbutenyl diphosphate: step 1/1. It participates in isoprenoid biosynthesis; isopentenyl diphosphate biosynthesis via DXP pathway; isopentenyl diphosphate from 1-deoxy-D-xylulose 5-phosphate: step 6/6. Its function is as follows. Catalyzes the conversion of 1-hydroxy-2-methyl-2-(E)-butenyl 4-diphosphate (HMBPP) into a mixture of isopentenyl diphosphate (IPP) and dimethylallyl diphosphate (DMAPP). Acts in the terminal step of the DOXP/MEP pathway for isoprenoid precursor biosynthesis. This chain is 4-hydroxy-3-methylbut-2-enyl diphosphate reductase, found in Dehalococcoides mccartyi (strain CBDB1).